A 1088-amino-acid chain; its full sequence is uncharacterized protein (1088 aa).

Phosphoserine is present on S299. The disordered stretch occupies residues 954–980 (PRSSVATTASTESSEQGPKMKRMARRK). Positions 956 to 968 (SSVATTASTESSE) are enriched in low complexity. Phosphoserine is present on S984. T1013 is modified (phosphothreonine). The tract at residues 1063-1088 (MKVTDKAKDEDIDPMDPMSPLNKDVS) is disordered. S1081 is subject to Phosphoserine.

This is an uncharacterized protein from Saccharomyces cerevisiae (strain ATCC 204508 / S288c) (Baker's yeast).